The chain runs to 226 residues: 7-cyano-7-deazaguanine synthase (226 aa).

ATP is bound at residue 7–17; the sequence is LSGGMDSLVTT. Zn(2+)-binding residues include Cys187, Cys195, Cys198, and Cys201.

It belongs to the QueC family. It depends on Zn(2+) as a cofactor.

The catalysed reaction is 7-carboxy-7-deazaguanine + NH4(+) + ATP = 7-cyano-7-deazaguanine + ADP + phosphate + H2O + H(+). It functions in the pathway purine metabolism; 7-cyano-7-deazaguanine biosynthesis. Its function is as follows. Catalyzes the ATP-dependent conversion of 7-carboxy-7-deazaguanine (CDG) to 7-cyano-7-deazaguanine (preQ(0)). This chain is 7-cyano-7-deazaguanine synthase, found in Chloroherpeton thalassium (strain ATCC 35110 / GB-78).